Here is a 2294-residue protein sequence, read N- to C-terminus: Protein Ycf2 (2294 aa).

1648-1655 (GSIGTGRS) lines the ATP pocket.

Belongs to the Ycf2 family.

The protein localises to the plastid. It is found in the chloroplast stroma. Its function is as follows. Probable ATPase of unknown function. Its presence in a non-photosynthetic plant (Epifagus virginiana) and experiments in tobacco indicate that it has an essential function which is probably not related to photosynthesis. This chain is Protein Ycf2, found in Arabidopsis thaliana (Mouse-ear cress).